Here is a 61-residue protein sequence, read N- to C-terminus: Metallothionein-1C (61 aa).

The interval 1-29 (MDPNCSCSTGGSCSCAGSCTCKACRCTSC) is beta. Residues C5, C7, C13, C15, C19, C21, C24, C26, C29, C33, C34, C36, C37, C41, C44, C48, C50, C57, C59, and C60 each coordinate a divalent metal cation. The tract at residues 30 to 61 (KKSCCSCCPAGCARCAQGCICKGASDKCSCCA) is alpha.

The protein belongs to the metallothionein superfamily. Type 1 family. As to quaternary structure, monomer.

Metallothioneins have a high content of cysteine residues that bind various heavy metals; these proteins are transcriptionally regulated by both heavy metals and glucocorticoids. This chain is Metallothionein-1C (MT1C), found in Sus scrofa (Pig).